A 162-amino-acid polypeptide reads, in one-letter code: Catabolic 3-dehydroquinase (162 aa).

Y24 functions as the Proton acceptor in the catalytic mechanism. Residues N88, H94, and D101 each coordinate substrate. H114 (proton donor) is an active-site residue. Residues 115–116 and R125 each bind substrate; that span reads VS.

It belongs to the type-II 3-dehydroquinase family. In terms of assembly, homododecamer. Adopts a ring-like structure, composed of an arrangement of two hexameric rings stacked on top of one another.

The enzyme catalyses 3-dehydroquinate = 3-dehydroshikimate + H2O. The protein operates within aromatic compound metabolism; 3,4-dihydroxybenzoate biosynthesis; 3,4-dihydroxybenzoate from 3-dehydroquinate: step 1/2. In terms of biological role, is involved in the catabolism of quinate. Allows the utilization of quinate as carbon source via the beta-ketoadipate pathway. This Podospora anserina (strain S / ATCC MYA-4624 / DSM 980 / FGSC 10383) (Pleurage anserina) protein is Catabolic 3-dehydroquinase.